The primary structure comprises 246 residues: Phycobilisome rod-core linker polypeptide CpcG2 (246 aa).

The region spanning Ser-11–Arg-189 is the PBS-linker domain. The interval Asp-224–Arg-246 is disordered. Over residues Ala-235 to Arg-246 the composition is skewed to polar residues.

It belongs to the phycobilisome linker protein family. The phycobilisome is a hemidiscoidal structure that is composed of two distinct substructures: a core complex and a number of rods radiating from the core.

Its subcellular location is the cellular thylakoid membrane. Functionally, rod-core linker protein required for attachment of phycocyanin to allophycocyanin in cores of phycobilisomes. Linker polypeptides determine the state of aggregation and the location of the disk-shaped phycobiliprotein units within the phycobilisome and modulate their spectroscopic properties in order to mediate a directed and optimal energy transfer. This is Phycobilisome rod-core linker polypeptide CpcG2 (cpcG2) from Thermosynechococcus vestitus (strain NIES-2133 / IAM M-273 / BP-1).